An 872-amino-acid polypeptide reads, in one-letter code: MSSFHFYFPSVGLFSFFCFFLVSLATEPHIGLGSKLKASEPNRAWVSANGTFAIGFTRFKPTDRFLLSIWFAQLPGDPTIVWSPNRNSPVTKEAVLELEATGNLVLSDQNTVVWTSNTSNHGVESAVMSESGNFLLLGTEVTAGPTIWQSFSQPSDTLLPNQPLTVSLELTSNPSPSRHGHYSLKMLQQHTSLSLGLTYNINLDPHANYSYWSGPDISNVTGDVTAVLDDTGSFKIVYGESSIGAVYVYKNPVDDNRNYNNSSNLGLTKNPVLRRLVLENNGNLRLYRWDNDMNGSSQWVPEWAAVSNPCDIAGICGNGVCNLDRTKKNADCLCLPGSVKLPDQENAKLCSDNSSLVQECESNINRNGSFKISTVQETNYYFSERSVIENISDISNVRKCGEMCLSDCKCVASVYGLDDEKPYCWILKSLNFGGFRDPGSTLFVKTRANESYPSNSNNNDSKSRKSHGLRQKVLVIPIVVGMLVLVALLGMLLYYNLDRKRTLKRAAKNSLILCDSPVSFTYRDLQNCTNNFSQLLGSGGFGTVYKGTVAGETLVAVKRLDRALSHGEREFITEVNTIGSMHHMNLVRLCGYCSEDSHRLLVYEYMINGSLDKWIFSSEQTANLLDWRTRFEIAVATAQGIAYFHEQCRNRIIHCDIKPENILLDDNFCPKVSDFGLAKMMGREHSHVVTMIRGTRGYLAPEWVSNRPITVKADVYSYGMLLLEIVGGRRNLDMSYDAEDFFYPGWAYKELTNGTSLKAVDKRLQGVAEEEEVVKALKVAFWCIQDEVSMRPSMGEVVKLLEGTSDEINLPPMPQTILELIEEGLEDVYRAMRREFNNQLSSLTVNTITTSQSYRSSSRSHATCSYSSMSPR.

Residues 1-25 form the signal peptide; sequence MSSFHFYFPSVGLFSFFCFFLVSLA. Over 26-472 the chain is Extracellular; the sequence is TEPHIGLGSK…SRKSHGLRQK (447 aa). The 120-residue stretch at 30–149 folds into the Bulb-type lectin domain; that stretch reads IGLGSKLKAS…EVTAGPTIWQ (120 aa). N-linked (GlcNAc...) asparagine glycosylation is found at N49, N117, N208, N219, N261, and N294. An EGF-like; atypical domain is found at 306–344; that stretch reads VSNPCDIAGICGNGVCNLDRTKKNADCLCLPGSVKLPDQ. 2 disulfide bridges follow: C310–C321 and C316–C332. N-linked (GlcNAc...) asparagine glycans are attached at residues N353, N367, and N390. The PAN domain occupies 360 to 447; sequence CESNINRNGS…PGSTLFVKTR (88 aa). 2 disulfide bridges follow: C400–C424 and C404–C410. N449 and N459 each carry an N-linked (GlcNAc...) asparagine glycan. A helical transmembrane segment spans residues 473 to 493; that stretch reads VLVIPIVVGMLVLVALLGMLL. Over 494 to 872 the chain is Cytoplasmic; that stretch reads YYNLDRKRTL…TCSYSSMSPR (379 aa). At T521 the chain carries Phosphothreonine. One can recognise a Protein kinase domain in the interval 530–810; that stretch reads NNFSQLLGSG…LEGTSDEINL (281 aa). Residues 536–544 and K558 each bind ATP; that span reads LGSGGFGTV. A Phosphotyrosine modification is found at Y603. Residues 619–637 are caM-binding; sequence EQTANLLDWRTRFEIAVAT. D656 functions as the Proton acceptor in the catalytic mechanism. Phosphothreonine occurs at positions 690 and 695.

The protein belongs to the protein kinase superfamily. Ser/Thr protein kinase family.

The protein resides in the cell membrane. The catalysed reaction is L-seryl-[protein] + ATP = O-phospho-L-seryl-[protein] + ADP + H(+). It carries out the reaction L-threonyl-[protein] + ATP = O-phospho-L-threonyl-[protein] + ADP + H(+). In Arabidopsis thaliana (Mouse-ear cress), this protein is G-type lectin S-receptor-like serine/threonine-protein kinase At5g24080.